The sequence spans 187 residues: uncharacterized protein (187 aa).

Residues 6 to 66 (TDLAEQIFSA…QFAHRVFSMF (61 aa)) enclose the HTH tetR-type domain. Positions 29-48 (SMLKLAKEANVAAGTIYLYF) form a DNA-binding region, H-T-H motif.

This is an uncharacterized protein from Haemophilus influenzae (strain ATCC 51907 / DSM 11121 / KW20 / Rd).